The primary structure comprises 105 residues: 5,5'-dehydrodivanillate O-demethylase ferredoxin subunit (105 aa).

The 104-residue stretch at 2–105 (AQLKVVTRDG…GMTVTIAPED (104 aa)) folds into the 2Fe-2S ferredoxin-type domain. Residues C40, C46, C49, and C86 each coordinate [2Fe-2S] cluster.

It belongs to the adrenodoxin/putidaredoxin family. Monomer. The three-component monooxygenase is composed of an oxygenase (LigXa), a ferredoxin (LigXc) and a ferredoxin reductase (LigXd). Requires [2Fe-2S] cluster as cofactor.

The enzyme catalyses 5,5'-dehydrodivanillate + NADH + O2 + H(+) = 2,2',3-trihydroxy-3'-methoxy-5,5'-dicarboxybiphenyl + formaldehyde + NAD(+) + H2O. Functionally, involved in the catabolism of 5,5'-dehydrodivanillate (DDVA), an intermediate in the biodegradation of lignin. Part of a three-component monooxygenase that catalyzes the O-demethylation of DDVA, leading to the formation of 2,2',3-trihydroxy-3'-methoxy-5,5'-dicarboxybiphenyl (OH-DDVA). LigXc probably functions as an intermediate electron transfer protein between LigXd and LigXa. In Sphingobium sp. (strain NBRC 103272 / SYK-6), this protein is 5,5'-dehydrodivanillate O-demethylase ferredoxin subunit.